Consider the following 165-residue polypeptide: 6,7-dimethyl-8-ribityllumazine synthase (165 aa).

5-amino-6-(D-ribitylamino)uracil is bound by residues Phe24, 62-64, and 86-88; these read AFE and AVI. 91–92 provides a ligand contact to (2S)-2-hydroxy-3-oxobutyl phosphate; that stretch reads DT. The active-site Proton donor is the His94. Phe119 contacts 5-amino-6-(D-ribitylamino)uracil. A (2S)-2-hydroxy-3-oxobutyl phosphate-binding site is contributed by Arg133.

This sequence belongs to the DMRL synthase family.

It catalyses the reaction (2S)-2-hydroxy-3-oxobutyl phosphate + 5-amino-6-(D-ribitylamino)uracil = 6,7-dimethyl-8-(1-D-ribityl)lumazine + phosphate + 2 H2O + H(+). The protein operates within cofactor biosynthesis; riboflavin biosynthesis; riboflavin from 2-hydroxy-3-oxobutyl phosphate and 5-amino-6-(D-ribitylamino)uracil: step 1/2. Functionally, catalyzes the formation of 6,7-dimethyl-8-ribityllumazine by condensation of 5-amino-6-(D-ribitylamino)uracil with 3,4-dihydroxy-2-butanone 4-phosphate. This is the penultimate step in the biosynthesis of riboflavin. The chain is 6,7-dimethyl-8-ribityllumazine synthase from Prochlorococcus marinus (strain MIT 9313).